A 354-amino-acid polypeptide reads, in one-letter code: Cytoplasmic tRNA 2-thiolation protein 1 (354 aa).

This sequence belongs to the TtcA family. CTU1/NCS6/ATPBD3 subfamily.

It localises to the cytoplasm. The protein operates within tRNA modification; 5-methoxycarbonylmethyl-2-thiouridine-tRNA biosynthesis. Plays a central role in 2-thiolation of mcm(5)S(2)U at tRNA wobble positions of tRNA(Lys), tRNA(Glu) and tRNA(Gln). Directly binds tRNAs and probably acts by catalyzing adenylation of tRNAs, an intermediate required for 2-thiolation. It is unclear whether it acts as a sulfurtransferase that transfers sulfur from thiocarboxylated URM1 onto the uridine of tRNAs at wobble position. Prior mcm(5) tRNA modification by the elongator complex is required for 2-thiolation. May also be involved in protein urmylation. The protein is Cytoplasmic tRNA 2-thiolation protein 1 of Laccaria bicolor (strain S238N-H82 / ATCC MYA-4686) (Bicoloured deceiver).